Consider the following 187-residue polypeptide: tRNA (cytidine(56)-2'-O)-methyltransferase (187 aa).

Residues L94 and 120–124 (GAEKV) contribute to the S-adenosyl-L-methionine site.

The protein belongs to the aTrm56 family. As to quaternary structure, homodimer.

Its subcellular location is the cytoplasm. The catalysed reaction is cytidine(56) in tRNA + S-adenosyl-L-methionine = 2'-O-methylcytidine(56) in tRNA + S-adenosyl-L-homocysteine + H(+). In terms of biological role, specifically catalyzes the AdoMet-dependent 2'-O-ribose methylation of cytidine at position 56 in tRNAs. In Hyperthermus butylicus (strain DSM 5456 / JCM 9403 / PLM1-5), this protein is tRNA (cytidine(56)-2'-O)-methyltransferase.